An 83-amino-acid chain; its full sequence is uncharacterized protein (83 aa).

Residues 15–36 (RLKNGRGNKTMSESDYNTSDSG) are disordered. The span at 21-35 (GNKTMSESDYNTSDS) shows a compositional bias: polar residues.

This is an uncharacterized protein from Aedes vexans (Inland floodwater mosquito).